Consider the following 444-residue polypeptide: Glutamyl-tRNA reductase (444 aa).

Substrate-binding positions include 49-52, Ser-109, 114-116, and Gln-120; these read TCNR and ETQ. Cys-50 serves as the catalytic Nucleophile. 189 to 194 contacts NADP(+); that stretch reads GAGKMG.

It belongs to the glutamyl-tRNA reductase family. In terms of assembly, homodimer.

The enzyme catalyses (S)-4-amino-5-oxopentanoate + tRNA(Glu) + NADP(+) = L-glutamyl-tRNA(Glu) + NADPH + H(+). Its pathway is porphyrin-containing compound metabolism; protoporphyrin-IX biosynthesis; 5-aminolevulinate from L-glutamyl-tRNA(Glu): step 1/2. In terms of biological role, catalyzes the NADPH-dependent reduction of glutamyl-tRNA(Glu) to glutamate 1-semialdehyde (GSA). This chain is Glutamyl-tRNA reductase, found in Bacillus cereus (strain ATCC 14579 / DSM 31 / CCUG 7414 / JCM 2152 / NBRC 15305 / NCIMB 9373 / NCTC 2599 / NRRL B-3711).